Here is a 397-residue protein sequence, read N- to C-terminus: Subtilisin-like protease 3 (397 aa).

Positions 1–19 (MGCIKVISVFLAAVAAVDA) are cleaved as a signal peptide. The propeptide occupies 20–116 (RAFFHNRGGN…VEHDRVVKLA (97 aa)). Residues 35-116 (SYIVVMKDGV…VEHDRVVKLA (82 aa)) form the Inhibitor I9 domain. The Peptidase S8 domain maps to 126–397 (TWGLGRVSHK…NKLLYNGSGR (272 aa)). Catalysis depends on charge relay system residues Asp158 and His189. An N-linked (GlcNAc...) asparagine glycan is attached at Asn250. Ser344 acts as the Charge relay system in catalysis. Asn393 is a glycosylation site (N-linked (GlcNAc...) asparagine).

It belongs to the peptidase S8 family.

Its subcellular location is the secreted. Secreted subtilisin-like serine protease with keratinolytic activity that contributes to pathogenicity. This is Subtilisin-like protease 3 (SUB3) from Arthroderma otae (strain ATCC MYA-4605 / CBS 113480) (Microsporum canis).